The chain runs to 186 residues: Putative inactive recombination-promoting nuclease-like protein YjiQ (186 aa).

The protein belongs to the Rpn/YhgA-like nuclease family.

In terms of biological role, this pseudogene is the C-terminal fragment of low activity DNA endonuclease RpnD which probably yields 3'-hydroxyl ends. The intact protein can be seen in this entry (AC B7NGZ6). Expression of the repaired protein increases the frequency of recA-independent recombination, but also decreases viability probably via DNA damage; in a RecA strain expression has no effect on viability but does induce the SOS repair response. May play a role in horizontal gene transfer. The polypeptide is Putative inactive recombination-promoting nuclease-like protein YjiQ (yjiQ) (Escherichia coli (strain K12)).